The primary structure comprises 378 residues: Tyrosinase-like protein phomQ1' (378 aa).

A helical membrane pass occupies residues threonine 42–serine 62. Cu cation contacts are provided by histidine 130 and histidine 139. The N-linked (GlcNAc...) asparagine glycan is linked to asparagine 209. Cu cation contacts are provided by histidine 279 and histidine 305.

It belongs to the tyrosinase family. Cu(2+) is required as a cofactor.

It is found in the membrane. Its pathway is mycotoxin biosynthesis. Tyrosinase-like protein; part of the gene cluster that mediates the biosynthesis of the phomopsins, a group of hexapeptide mycotoxins which infects lupins and causes lupinosis disease in livestock. The pathway starts with the processing of the precursor phomA' by several endopeptidases including kexin proteases as well as the cluster-specific S41 family peptidase phomP1 and the oligopeptidase phomG' to produce 10 identical copies of the hexapeptide Tyr-Val-Ile-Pro-Ile-Asp. After being excised from the precursor peptide, the core peptides are cyclized and modified post-translationally by enzymes encoded within the gene cluster. The timing and order of proteolysis of the phomA' precursor and PTMs are still unknown. Two tyrosinase-like enzymes, phomQ1' and phomQ2, catalyze the chlorination and hydroxylation of Tyr, respectively. PhomYb, is proposed to be involved in the construction of the macrocyclic structure. The other 4 ustYa family proteins may be involved in PTMs that generate the unique structure of phomopsin A. PhomYa' is required for the hydroxylation of C-beta of Tyr. PhomYc', phomYd', and phomYe are responsible for the biosynthesis of 2,3-dehydroisoleucine (dIle), 2,3-dehydroaspartic acid (dAsp), and 3,4-dehydroproline (dPro), respectively. While dIle formation by phomYc' is indispensable for the installation of dAsp by phomYd', the order of the other PTMs have not been elucidated yet. Most of the biosynthetic enzymes likely have broad substrate specificity, and thus, there might be a metabolic grid from a precursor to phomopsin A. The enzyme(s) responsible for the biosynthesis of 3,4-dehydrovaline (dVal) have also not been identified yet. Finally, phomM' acts as an S-adenosylmethionine-dependent alpha-N-methyltransferase that catalyzes two successive N-methylation reactions, converting N-desmethyl-phomopsin A to phomopsin A and phomopsin A further to an N,N-dimethylated congener called phomopsin E. In Diaporthe leptostromiformis (Lupinosis disease fungus), this protein is Tyrosinase-like protein phomQ1'.